A 195-amino-acid polypeptide reads, in one-letter code: ATP-dependent Clp protease proteolytic subunit (195 aa).

The active-site Nucleophile is the serine 99. Histidine 124 is a catalytic residue.

This sequence belongs to the peptidase S14 family. In terms of assembly, fourteen ClpP subunits assemble into 2 heptameric rings which stack back to back to give a disk-like structure with a central cavity, resembling the structure of eukaryotic proteasomes.

The protein resides in the cytoplasm. The enzyme catalyses Hydrolysis of proteins to small peptides in the presence of ATP and magnesium. alpha-casein is the usual test substrate. In the absence of ATP, only oligopeptides shorter than five residues are hydrolyzed (such as succinyl-Leu-Tyr-|-NHMec, and Leu-Tyr-Leu-|-Tyr-Trp, in which cleavage of the -Tyr-|-Leu- and -Tyr-|-Trp bonds also occurs).. Its function is as follows. Cleaves peptides in various proteins in a process that requires ATP hydrolysis. Has a chymotrypsin-like activity. Plays a major role in the degradation of misfolded proteins. This Coxiella burnetii (strain CbuG_Q212) (Coxiella burnetii (strain Q212)) protein is ATP-dependent Clp protease proteolytic subunit.